The sequence spans 252 residues: tRNA pseudouridine synthase A (252 aa).

Asp-52 (nucleophile) is an active-site residue. Substrate is bound at residue Tyr-111.

The protein belongs to the tRNA pseudouridine synthase TruA family. In terms of assembly, homodimer.

It carries out the reaction uridine(38/39/40) in tRNA = pseudouridine(38/39/40) in tRNA. Functionally, formation of pseudouridine at positions 38, 39 and 40 in the anticodon stem and loop of transfer RNAs. This is tRNA pseudouridine synthase A from Methylorubrum populi (strain ATCC BAA-705 / NCIMB 13946 / BJ001) (Methylobacterium populi).